The sequence spans 196 residues: Nucleoside triphosphate pyrophosphatase (196 aa).

Catalysis depends on Asp-73, which acts as the Proton acceptor.

This sequence belongs to the Maf family. The cofactor is a divalent metal cation.

It localises to the cytoplasm. The catalysed reaction is a ribonucleoside 5'-triphosphate + H2O = a ribonucleoside 5'-phosphate + diphosphate + H(+). The enzyme catalyses a 2'-deoxyribonucleoside 5'-triphosphate + H2O = a 2'-deoxyribonucleoside 5'-phosphate + diphosphate + H(+). Nucleoside triphosphate pyrophosphatase. May have a dual role in cell division arrest and in preventing the incorporation of modified nucleotides into cellular nucleic acids. The chain is Nucleoside triphosphate pyrophosphatase from Anaplasma marginale (strain Florida).